Consider the following 143-residue polypeptide: Regulator of ribonuclease activity B (143 aa).

The tract at residues 113-143 is disordered; sequence EDPNAEEDEYGDDGEFFDDEDEADFNNAKVH. Positions 115–136 are enriched in acidic residues; the sequence is PNAEEDEYGDDGEFFDDEDEAD.

The protein belongs to the RraB family. Interacts with the C-terminal region of Rne.

Its subcellular location is the cytoplasm. In terms of biological role, globally modulates RNA abundance by binding to RNase E (Rne) and regulating its endonucleolytic activity. Can modulate Rne action in a substrate-dependent manner by altering the composition of the degradosome. The chain is Regulator of ribonuclease activity B from Haemophilus ducreyi (strain 35000HP / ATCC 700724).